The primary structure comprises 1072 residues: RIMS-binding protein 2 (1072 aa).

In terms of domain architecture, SH3 1 spans 181-248 (GKVHLCVARY…PSNFVDFIQD (68 aa)). Fibronectin type-III domains lie at 311–404 (VPYP…GKDV), 407–489 (APSQ…KKEA), and 503–604 (PPQD…VPPA). Disordered regions lie at residues 597–681 (PDLL…APVS) and 713–800 (SAGQ…TSHN). Positions 599 to 615 (LLVPPAPHPRTAPPPKP) are enriched in pro residues. Residues 620-635 (MDTKDQHLGPHVKVDE) are compositionally biased toward basic and acidic residues. A compositionally biased stretch (low complexity) spans 660–670 (GPGRRSPSPSR). A phosphoserine mark is found at Ser-720 and Ser-728. 2 stretches are compositionally biased toward basic and acidic residues: residues 730–743 (EVKR…DFLK) and 754–765 (CHGDEYHTESSR). Over residues 771 to 781 (DIMEEDEEELY) the composition is skewed to acidic residues. Phosphoserine occurs at positions 852 and 859. At Thr-861 the chain carries Phosphothreonine. SH3 domains lie at 868–936 (LPAR…EIHA) and 972–1039 (VPTR…EVPD). The disordered stretch occupies residues 1044–1072 (HLSDAPPHYSHDPPMRSKAKRKKSVHFTP). The segment covering 1060-1072 (SKAKRKKSVHFTP) has biased composition (basic residues).

It belongs to the RIMBP family. As to quaternary structure, interacts with RIMS1, RIMS2, CACNA1D and CACNA1B, and potentially with other Ca(2+) channel alpha-1 isoforms.

It is found in the cell membrane. Its subcellular location is the synapse. Plays a role in the synaptic transmission as bifunctional linker that interacts simultaneously with RIMS1, RIMS2, CACNA1D and CACNA1B. This chain is RIMS-binding protein 2 (Rimbp2), found in Mus musculus (Mouse).